Consider the following 808-residue polypeptide: Phenylalanine--tRNA ligase beta subunit (808 aa).

One can recognise a tRNA-binding domain in the interval 40-149; that stretch reads RPELDFVKIV…DQAEVGKTIR (110 aa). Residues 407 to 484 enclose the B5 domain; the sequence is HKEVRIHTDI…RTKGYDTIQV (78 aa). Positions 462, 468, 471, and 472 each coordinate Mg(2+). The FDX-ACB domain maps to 716-808; the sequence is SQFPEAEIDL…LAGKNGFVLR (93 aa).

The protein belongs to the phenylalanyl-tRNA synthetase beta subunit family. Type 1 subfamily. In terms of assembly, tetramer of two alpha and two beta subunits. Mg(2+) is required as a cofactor.

It localises to the cytoplasm. The catalysed reaction is tRNA(Phe) + L-phenylalanine + ATP = L-phenylalanyl-tRNA(Phe) + AMP + diphosphate + H(+). This Leptospira interrogans serogroup Icterohaemorrhagiae serovar Lai (strain 56601) protein is Phenylalanine--tRNA ligase beta subunit.